The primary structure comprises 617 residues: Probable Xaa-Pro aminopeptidase P (617 aa).

Residues aspartate 414, aspartate 425, glutamate 523, and glutamate 537 each coordinate Mn(2+).

It belongs to the peptidase M24B family. The cofactor is Mn(2+).

The catalysed reaction is Release of any N-terminal amino acid, including proline, that is linked to proline, even from a dipeptide or tripeptide.. In terms of biological role, catalyzes the removal of a penultimate prolyl residue from the N-termini of peptides. The protein is Probable Xaa-Pro aminopeptidase P (AMPP) of Ajellomyces capsulatus (strain NAm1 / WU24) (Darling's disease fungus).